Here is a 166-residue protein sequence, read N- to C-terminus: Large ribosomal subunit protein uL10 (166 aa).

The protein belongs to the universal ribosomal protein uL10 family. As to quaternary structure, part of the ribosomal stalk of the 50S ribosomal subunit. The N-terminus interacts with L11 and the large rRNA to form the base of the stalk. The C-terminus forms an elongated spine to which L12 dimers bind in a sequential fashion forming a multimeric L10(L12)X complex.

In terms of biological role, forms part of the ribosomal stalk, playing a central role in the interaction of the ribosome with GTP-bound translation factors. The polypeptide is Large ribosomal subunit protein uL10 (Listeria innocua serovar 6a (strain ATCC BAA-680 / CLIP 11262)).